The following is a 215-amino-acid chain: MSAETANPVNQARSTIYQLLSSLFAKEVDHKTLHELTSTQAQAFWSQLAEEPNFKADVDVLVAELAKLNSDKALLELAADYCGLFLVGTNNSASPYASLYLTDTPVAKGDEPLLFGEQHQQMTQFLKQSQLQVQSEFPEPADHLAVILAYVAHIAMYTSNQQQLEFIRDNLTNWLATFVAKVAKVDTGKFYIALAQLTLAWVNSDLEWLTSESTS.

This sequence belongs to the TorD/DmsD family. TorD subfamily.

It localises to the cytoplasm. Involved in the biogenesis of TorA. Acts on TorA before the insertion of the molybdenum cofactor and, as a result, probably favors a conformation of the apoenzyme that is competent for acquiring the cofactor. In Shewanella piezotolerans (strain WP3 / JCM 13877), this protein is Chaperone protein TorD.